A 1185-amino-acid chain; its full sequence is Chromosome partition protein Smc (1185 aa).

ATP is bound at residue 32-39 (PNGSGKSN). Residues 228–503 (SRLVKKLTIA…LQAVQERYTN (276 aa)) are a coiled coil. Residues 300–323 (TQGQQGVDAERRQNQQSEQERLTA) are disordered. A compositionally biased stretch (basic and acidic residues) spans 307-320 (DAERRQNQQSEQER). An SMC hinge domain is found at 519 to 637 (SGVAGAVSEL…VDTLDHAMAI (119 aa)). Coiled coils occupy residues 675 to 928 (QQQQ…RRLE) and 989 to 1025 (AIDE…ADLD).

Belongs to the SMC family. In terms of assembly, homodimer.

It is found in the cytoplasm. In terms of biological role, required for chromosome condensation and partitioning. The polypeptide is Chromosome partition protein Smc (Lactiplantibacillus plantarum (strain ATCC BAA-793 / NCIMB 8826 / WCFS1) (Lactobacillus plantarum)).